A 144-amino-acid polypeptide reads, in one-letter code: Urease accessory protein UreE (144 aa).

The protein belongs to the UreE family.

It is found in the cytoplasm. In terms of biological role, involved in urease metallocenter assembly. Binds nickel. Probably functions as a nickel donor during metallocenter assembly. The polypeptide is Urease accessory protein UreE (Thermosynechococcus vestitus (strain NIES-2133 / IAM M-273 / BP-1)).